We begin with the raw amino-acid sequence, 1337 residues long: C-Jun-amino-terminal kinase-interacting protein 3 (1337 aa).

The region spanning 12–100 is the RH1 domain; it reads VVVYQDDYCS…LTQYEREKAL (89 aa). The tract at residues 50–80 is kinesin-binding domain (KBD); essential for its function in axon elongation; the sequence is EVVKELMPLVVNVLENLDSVLSENQEHEVEL. Residues 58 to 177 adopt a coiled-coil conformation; that stretch reads LVVNVLENLD…HTEMIQTYVE (120 aa). Disordered regions lie at residues 183-211 and 245-285; these read KMQQ…SLNV and SSSY…PSAA. The span at 184–198 shows a compositional bias: polar residues; the sequence is MQQVGGSGQTESSLP. A JNK-binding domain (JBD); essential for its function in axon elongation region spans residues 210–226; sequence NVFPLADGMVRAQMGGK. Positions 261–270 are enriched in low complexity; the sequence is SSAAATPSTT. 3 positions are modified to phosphothreonine; by MAPK: Thr266, Thr276, and Thr287. The segment covering 271–282 has biased composition (polar residues); it reads GTKSNTPTSSVP. A phosphoserine; by ROCK1 mark is found at Ser315 and Ser365. Phosphoserine is present on Ser366. The segment at 424–459 is leucine zipper-like domain (LZ); essential for its function in axon elongation; it reads LLLENSQLLETKNALNVVKNDLIAKVDQLSGEQEVL. Residues 437-555 adopt a coiled-coil conformation; it reads ALNVVKNDLI…LQEAVRWTEM (119 aa). The segment at 459 to 515 is interaction with NTRK2; sequence LKGELEAAKQAKVKLENRIKELEEELKRVKSEAVTARREPREEVEDVSSYLCTELDK. Positions 521-595 constitute an RH2 domain; the sequence is RRRFTRVEMA…SPPPAKRSYP (75 aa). Position 603 is a phosphoserine (Ser603). The disordered stretch occupies residues 633–655; sequence DDCTSSARREQKREQYRQVREHV. Basic and acidic residues predominate over residues 639-655; sequence ARREQKREQYRQVREHV. Phosphoserine is present on Ser677. 2 disordered regions span residues 719–772 and 859–966; these read WKPH…ATSS and PRSN…TTTS. The segment covering 739–765 has biased composition (basic and acidic residues); the sequence is LTCDREGEGEPKSTHPSPEKKKAKETP. Polar residues-rich tracts occupy residues 879 to 892 and 941 to 952; these read VATT…PSQS and ENGSESNGTIVQ.

The protein belongs to the JIP scaffold family. Forms homo- or heterooligomeric complexes. The central region of MAPK8IP3 interacts with the C-terminal of MAPK8IP2 but not MAPK8IP1. Binds specific components of the JNK signaling pathway namely MAPK8/JNK1, MAPK9/JNK2 and MAPK10/JNK3 to the N-terminal region, MAP2K4/MKK4 and MAP2K7/MKK7 to the central region and MAP3K11 to the C-terminal region. Binds the TPR motif-containing C-terminal of kinesin light chain, KLC1. Pre-assembled MAPK8IP1 scaffolding complexes are then transported as a cargo of kinesin, to the required subcellular location. Interacts with ROCK1 and this interaction is enhanced by ultraviolet-B (UVB) radiation. Interacts with SH3RF2. Interacts with NTRK2/TRKB and NTRK3/TRKC. In terms of processing, phosphorylation by ROCK1 is crucial for the recruitment of JNK. In terms of tissue distribution, highly expressed throughout many regions of the brain and at lower levels in the heart, liver, lung, testes and kidney. All isoforms have been identified in the brain, isoform 1a is also expressed in the spleen and lung.

It localises to the cytoplasm. The protein localises to the golgi apparatus. Its subcellular location is the cytoplasmic vesicle. The protein resides in the cell projection. It is found in the growth cone. It localises to the axon. The protein localises to the dendrite. Its subcellular location is the perinuclear region. Functionally, the JNK-interacting protein (JIP) group of scaffold proteins selectively mediates JNK signaling by aggregating specific components of the MAPK cascade to form a functional JNK signaling module. May function as a regulator of vesicle transport, through interactions with the JNK-signaling components and motor proteins. Promotes neuronal axon elongation in a kinesin- and JNK-dependent manner. Activates cofilin at axon tips via local activation of JNK, thereby regulating filopodial dynamics and enhancing axon elongation. Its binding to kinesin heavy chains (KHC), promotes kinesin-1 motility along microtubules and is essential for axon elongation and regeneration. Regulates cortical neuronal migration by mediating NTRK2/TRKB anterograde axonal transport during brain development. Acts as an adapter that bridges the interaction between NTRK2/TRKB and KLC1 and drives NTRK2/TRKB axonal but not dendritic anterograde transport, which is essential for subsequent BDNF-triggered signaling and filopodia formation. This is C-Jun-amino-terminal kinase-interacting protein 3 (Mapk8ip3) from Mus musculus (Mouse).